A 126-amino-acid chain; its full sequence is Small ribosomal subunit protein bS6 (126 aa).

The tract at residues 101 to 126 (VMMKAKEERSAKREDAAPRAEEAAAE) is disordered. Over residues 104–126 (KAKEERSAKREDAAPRAEEAAAE) the composition is skewed to basic and acidic residues.

The protein belongs to the bacterial ribosomal protein bS6 family.

Binds together with bS18 to 16S ribosomal RNA. The polypeptide is Small ribosomal subunit protein bS6 (Aliivibrio fischeri (strain ATCC 700601 / ES114) (Vibrio fischeri)).